The chain runs to 283 residues: MFRDVLKTLPQYLIPKHGITALAGYFADVKSPRLKNFLIRNFIRKFDVDMSEALIEDPKSYDCFNDFFIRHLKPECRPLSQSDVICPVDGCISEIGKIERGQLLQAKGKYYSVQELLACDGQLAEQFVQGQFATLYLSPKDYHRVHMPIDAELVSMTYIPGALFSVQPATTRVVPKLFARNERLAIFFKTKIGPMVMVMVGATIVGAIGTSWHGDVKRAKKLERFDYSERFPDKIISQGSEMGYFKLGSTVVLLFANGEKIQWDKELLAGSKIQLGKPMAIIT.

Catalysis depends on charge relay system; for autoendoproteolytic cleavage activity residues Asp-89, His-146, and Ser-249. Catalysis depends on Ser-249, which acts as the Schiff-base intermediate with substrate; via pyruvic acid; for decarboxylase activity. Residue Ser-249 is modified to Pyruvic acid (Ser); by autocatalysis.

It belongs to the phosphatidylserine decarboxylase family. PSD-B subfamily. Prokaryotic type I sub-subfamily. In terms of assembly, heterodimer of a large membrane-associated beta subunit and a small pyruvoyl-containing alpha subunit. Pyruvate serves as cofactor. Is synthesized initially as an inactive proenzyme. Formation of the active enzyme involves a self-maturation process in which the active site pyruvoyl group is generated from an internal serine residue via an autocatalytic post-translational modification. Two non-identical subunits are generated from the proenzyme in this reaction, and the pyruvate is formed at the N-terminus of the alpha chain, which is derived from the carboxyl end of the proenzyme. The autoendoproteolytic cleavage occurs by a canonical serine protease mechanism, in which the side chain hydroxyl group of the serine supplies its oxygen atom to form the C-terminus of the beta chain, while the remainder of the serine residue undergoes an oxidative deamination to produce ammonia and the pyruvoyl prosthetic group on the alpha chain. During this reaction, the Ser that is part of the protease active site of the proenzyme becomes the pyruvoyl prosthetic group, which constitutes an essential element of the active site of the mature decarboxylase.

It is found in the cell membrane. It catalyses the reaction a 1,2-diacyl-sn-glycero-3-phospho-L-serine + H(+) = a 1,2-diacyl-sn-glycero-3-phosphoethanolamine + CO2. It participates in phospholipid metabolism; phosphatidylethanolamine biosynthesis; phosphatidylethanolamine from CDP-diacylglycerol: step 2/2. In terms of biological role, catalyzes the formation of phosphatidylethanolamine (PtdEtn) from phosphatidylserine (PtdSer). In Legionella pneumophila (strain Corby), this protein is Phosphatidylserine decarboxylase proenzyme.